A 399-amino-acid chain; its full sequence is Centrosomal protein 43 (399 aa).

One can recognise a LisH domain in the interval 70-102 (DGRLVASLVAEFLQFFNLDFTLAVFHPETSTIQ). 2 disordered regions span residues 142 to 216 (PASV…SKSS) and 236 to 311 (DARD…KRGS). Ser-152 and Ser-160 each carry phosphoserine. Residues 163–172 (GKSSANSTPS) are compositionally biased toward polar residues. Phosphothreonine is present on Thr-170. Residues 175-186 (PRYKGQGKKKTI) are compositionally biased toward basic residues. The segment covering 197 to 216 (SETSQSEPSVSLSESKSKSS) has biased composition (low complexity). At Ser-202 the chain carries Phosphoserine. The span at 246–256 (DGDDVEGDSFF) shows a compositional bias: acidic residues. The span at 259–275 (PIPKPEKTYGWRAEPRK) shows a compositional bias: basic and acidic residues. A compositionally biased stretch (low complexity) spans 290–302 (RSGLSSLAGAPSL). Phosphoserine is present on residues Ser-301 and Ser-326. Residues 328 to 354 (GLGTGEDEDYADDFNSASHRSEKSELS) are disordered. Tyr-337 is subject to Phosphotyrosine.

Belongs to the CEP43 family. In terms of assembly, homodimer. Part of a ternary complex that contains CEP350, CEP43 and MAPRE1. Interacts directly with CEP350 and MAPRE1. Interacts with CEP19. Interacts (via N-terminus) with CEP350 (via C-terminus).

Its subcellular location is the cytoplasm. It is found in the cytoskeleton. It localises to the microtubule organizing center. The protein localises to the centrosome. The protein resides in the centriole. Its subcellular location is the cilium basal body. Its function is as follows. Required for anchoring microtubules to the centrosomes. Required for ciliation. This Mus musculus (Mouse) protein is Centrosomal protein 43.